The primary structure comprises 83 residues: Small ribosomal subunit protein uS17 (83 aa).

Belongs to the universal ribosomal protein uS17 family. Part of the 30S ribosomal subunit.

Its function is as follows. One of the primary rRNA binding proteins, it binds specifically to the 5'-end of 16S ribosomal RNA. In Buchnera aphidicola subsp. Acyrthosiphon pisum (strain 5A), this protein is Small ribosomal subunit protein uS17.